We begin with the raw amino-acid sequence, 340 residues long: Protein HP_1247 (340 aa).

As to quaternary structure, seems to interact with H.pylori HolB.

Could be the functional equivalent of DNA polymerase III delta subunit (HolA). This chain is Protein HP_1247, found in Helicobacter pylori (strain ATCC 700392 / 26695) (Campylobacter pylori).